Reading from the N-terminus, the 261-residue chain is MAGASAKVVAMLLSVLATYGFAAGVVYTNDWLPAKATWYGQPNGAGPDDNGGACGFKNTNQYPFMSMTSCGNEPLFQDGKGCGACYQIRCTNNPSCSGQPRTVIITDMNYYPVARYHFDLSGTAFGAMARPGLNDQLRHAGIIDIQFRRVPCYHRGLYVNFHVEAGSNPVYLAVLVEFANKDGTVVQLDVMESLPSGKPTRVWTPMRRSWGSIWRLDANHRLQGPFSLRMVSESGQTVIAHQVIPANWRANTNYGSKVQFR.

A signal peptide spans 1–24 (MAGASAKVVAMLLSVLATYGFAAG). Residues 51–157 (GGACGFKNTN…RRVPCYHRGL (107 aa)) enclose the Expansin-like EG45 domain. Intrachain disulfides connect Cys-54-Cys-82, Cys-85-Cys-152, and Cys-90-Cys-96. The region spanning 170–256 (VYLAVLVEFA…NWRANTNYGS (87 aa)) is the Expansin-like CBD domain.

This sequence belongs to the expansin family. Expansin B subfamily. Expressed in roots.

It is found in the secreted. Its subcellular location is the cell wall. The protein resides in the membrane. Functionally, may cause loosening and extension of plant cell walls by disrupting non-covalent bonding between cellulose microfibrils and matrix glucans. No enzymatic activity has been found. May be required for rapid internodal elongation in deepwater rice during submergence. The protein is Expansin-B2 (EXPB2) of Oryza sativa subsp. japonica (Rice).